A 321-amino-acid polypeptide reads, in one-letter code: Fe-S cluster assembly protein DRE2 (321 aa).

Residues 1–161 form an N-terminal SAM-like domain region; sequence MPAPVPPTAF…STPVTLSGAR (161 aa). Positions 123 to 168 are disordered; sequence PSPSTLAYTSPSAPSLPTVASDPSPAPSSSTPVTLSGARPLQLRRN. Low complexity predominate over residues 139 to 156; sequence PTVASDPSPAPSSSTPVT. Positions 162–197 are linker; sequence PLQLRRNGDKARKAALWAIDSPLIPDGGKSLLTPAD. Positions 203, 219, 222, and 224 each coordinate [2Fe-2S] cluster. Positions 203 to 224 are fe-S binding site A; it reads CVFPAENGKPVKRRRACKDCTC. The [4Fe-4S] cluster site is built by Cys285, Cys288, Cys296, and Cys299. 2 consecutive short sequence motifs (cx2C motif) follow at residues 285–288 and 296–299; these read CGSC and CSSC. A fe-S binding site B region spans residues 285–299; it reads CGSCYLGDAFRCSSC.

The protein belongs to the anamorsin family. As to quaternary structure, monomer. Interacts with TAH18. Interacts with MIA40. [2Fe-2S] cluster serves as cofactor. Requires [4Fe-4S] cluster as cofactor.

It localises to the cytoplasm. Its subcellular location is the mitochondrion intermembrane space. Component of the cytosolic iron-sulfur (Fe-S) protein assembly (CIA) machinery required for the maturation of extramitochondrial Fe-S proteins. Part of an electron transfer chain functioning in an early step of cytosolic Fe-S biogenesis, facilitating the de novo assembly of a [4Fe-4S] cluster on the scaffold complex CFD1-NBP35. Electrons are transferred to DRE2 from NADPH via the FAD- and FMN-containing protein TAH18. TAH18-DRE2 are also required for the assembly of the diferric tyrosyl radical cofactor of ribonucleotide reductase (RNR), probably by providing electrons for reduction during radical cofactor maturation in the catalytic small subunit RNR2. This chain is Fe-S cluster assembly protein DRE2, found in Cryptococcus neoformans var. neoformans serotype D (strain B-3501A) (Filobasidiella neoformans).